The chain runs to 217 residues: Redox-sensing transcriptional repressor Rex (217 aa).

A DNA-binding region (H-T-H motif) is located at residues 18-57 (LYYRFLKNLHASGKQRVSSAELSDAVKVDSATIRRDFSYF). NAD(+) is bound at residue 92–97 (GVGNLG).

The protein belongs to the transcriptional regulatory Rex family. In terms of assembly, homodimer.

The protein localises to the cytoplasm. Modulates transcription in response to changes in cellular NADH/NAD(+) redox state. The sequence is that of Redox-sensing transcriptional repressor Rex from Bacillus pumilus (strain SAFR-032).